We begin with the raw amino-acid sequence, 128 residues long: Cystatin-1 (128 aa).

The signal sequence occupies residues 1-17 (MIRSAVVLTVLVGVCLA). Positions 20 to 128 (GFVGGWSQVD…TKEVTSFECN (109 aa)) constitute a Cystatin domain. Cystine bridges form between Cys-84–Cys-96 and Cys-107–Cys-127.

It belongs to the cystatin family. In terms of tissue distribution, mainly expressed in gut.

The protein resides in the secreted. Functionally, inhibitor of cysteine proteinases. Strongly inhibits mammalian cathepsin B and H, and moderately inhibits mammalian cathepsin C. Also inhibits endogenous cathepsin B-like but not cathepsin C-like proteinases. May have a protective role against undesired digestion of a stored blood meal by endogenous peptidases. The protein is Cystatin-1 of Ornithodoros moubata (Soft tick).